Here is a 378-residue protein sequence, read N- to C-terminus: O-methyltransferase gsfD (378 aa).

S-adenosyl-L-methionine is bound by residues G219–G220, D244, D266–M267, and R282. The active-site Proton acceptor is the H286.

Belongs to the class I-like SAM-binding methyltransferase superfamily. Cation-independent O-methyltransferase family.

It carries out the reaction desmethyl-dehydrogriseofulvin + S-adenosyl-L-methionine = dehydrogriseofulvin + S-adenosyl-L-homocysteine + H(+). Its pathway is secondary metabolite biosynthesis; terpenoid biosynthesis. O-methyltransferase; part of the gene cluster that mediates the biosynthesis of griseofulvin, an important antifungal drug that has been in use for a long time for treating dermatophyte infections. The first step of the pathway is the formation of the heptaketide backbone by gsfA which is initiated by priming with acetyl-CoA, followed by sequential condensations of 6 malonyl-CoA units. The resulting benzophenone can undergo a spontaneous dehydration to form norlichexanthone. However, the true precursor for the griseofulvin biosynthesis is not norlichexanthone, but the heptaketide benzophenone that is O-methylated at 3-OH by gsfB to produce griseophenone D which is further methylated at 9-OH by gsfC to yield griseophenone C. Griseophenone C is then substrate of halogenase gsfI which is responsible for the regio-specific chlorination at the C13 position to form griseophenone B. The cytochrome P450 gsfF catalyzes the coupling of orcinol and phloroglucinol rings in griseophenone B to form desmethyl-dehydrogriseofulvin A which is further methylated at 5-OH by gsfD to yield dehydrogriseofulvin. Finally, gsfE performs stereospecific reduction of enone 18 of dehydrogriseofulvin to afford the final product griseofulvin. This Penicillium aethiopicum protein is O-methyltransferase gsfD.